Here is an 864-residue protein sequence, read N- to C-terminus: Leucine--tRNA ligase (864 aa).

The short motif at 42–52 (PYPSGKLHMGH) is the 'HIGH' region element. The 'KMSKS' region signature appears at 624-628 (KMSKS). Residue lysine 627 coordinates ATP.

Belongs to the class-I aminoacyl-tRNA synthetase family.

The protein localises to the cytoplasm. The catalysed reaction is tRNA(Leu) + L-leucine + ATP = L-leucyl-tRNA(Leu) + AMP + diphosphate. This chain is Leucine--tRNA ligase, found in Burkholderia ambifaria (strain ATCC BAA-244 / DSM 16087 / CCUG 44356 / LMG 19182 / AMMD) (Burkholderia cepacia (strain AMMD)).